Here is an 89-residue protein sequence, read N- to C-terminus: Large ribosomal subunit protein bL27 (89 aa).

The segment at 1–21 (MAHKKAGGSSRNGRDTEGRRL) is disordered.

Belongs to the bacterial ribosomal protein bL27 family.

The chain is Large ribosomal subunit protein bL27 from Granulibacter bethesdensis (strain ATCC BAA-1260 / CGDNIH1).